Consider the following 103-residue polypeptide: Large ribosomal subunit protein uL24 (103 aa).

Belongs to the universal ribosomal protein uL24 family. As to quaternary structure, part of the 50S ribosomal subunit.

Functionally, one of two assembly initiator proteins, it binds directly to the 5'-end of the 23S rRNA, where it nucleates assembly of the 50S subunit. One of the proteins that surrounds the polypeptide exit tunnel on the outside of the subunit. In Sinorhizobium medicae (strain WSM419) (Ensifer medicae), this protein is Large ribosomal subunit protein uL24.